Here is a 217-residue protein sequence, read N- to C-terminus: Yop proteins translocation protein R (217 aa).

The next 4 membrane-spanning stretches (helical) occupy residues 11–31 (IIVLSLLTLLPLISVMATSFV), 53–73 (MAMYGLAIILSLYVMAPVGFA), 157–177 (IGFLIYLPFIVIDLVISNILL), and 181–201 (MMMVSPMTISLPFKLLLFVLL).

Belongs to the FliP/MopC/SpaP family.

The protein localises to the cell membrane. Its function is as follows. Component of the yop secretion machinery. May have a role in the negative pathway regulation of yop expression controlled by calcium. In Yersinia pestis, this protein is Yop proteins translocation protein R (yscR).